Reading from the N-terminus, the 46-residue chain is Defensin-like protein AX2 (46 aa).

Disulfide bonds link Cys3–Cys46, Cys14–Cys34, Cys20–Cys40, and Cys24–Cys42.

Leaves and flowers.

Strong inhibiting activity against C.beticola and other filamentous fungi. Little or no effect against bacteria. The sequence is that of Defensin-like protein AX2 from Beta vulgaris (Sugar beet).